We begin with the raw amino-acid sequence, 1021 residues long: SWI/SNF-related matrix-associated actin-dependent regulator of chromatin subfamily A containing DEAD/H box 1 (1021 aa).

N-acetylmethionine is present on Met-1. Disordered regions lie at residues 1–82 (MNLF…SLSC) and 124–151 (SEPS…EDLS). Basic and acidic residues predominate over residues 7 to 19 (DRFRFEKRSKIEE). Residues 22–39 (EAAPQPSQARPSSPISLS) are compositionally biased toward low complexity. A Phosphothreonine modification is found at Thr-54. Ser-57 carries the post-translational modification Phosphoserine. A Glycyl lysine isopeptide (Lys-Gly) (interchain with G-Cter in SUMO2) cross-link involves residue Lys-77. 7 positions are modified to phosphoserine: Ser-79, Ser-124, Ser-127, Ser-132, Ser-144, Ser-145, and Ser-151. A CUE 1 domain is found at 156-198 (LKDAKLQTLKELFPQRSDSDLLKLIESTSTMDGAIAAALLMFG). Residues 201–246 (GGGPRKRKLSSSSEEDDVNDDQSVKQPRGDRGEESNESAEASSNWE) form a disordered region. Phosphoserine is present on residues Ser-210, Ser-213, Ser-235, and Ser-238. The CUE 2 domain occupies 247 to 290 (KQESIVLKLQKEFPNFDKQELREVLKEHEWMYTEALESLKVFAE). Phosphoserine is present on Ser-298. Residues 329-366 (VKPQNGFNKKRKKNVFNPKKAVEDSEYDSGSDAGSSLD) are disordered. Glycyl lysine isopeptide (Lys-Gly) (interchain with G-Cter in SUMO2) cross-links involve residues Lys-330 and Lys-466. Positions 504 to 672 (ALVHKHGLNG…MSLLNFVMPH (169 aa)) constitute a Helicase ATP-binding domain. 516–524 (ADEMGLGKT) contacts ATP. A DEGH box motif is present at residues 623-626 (DEGH). Residues 716-733 (RRVKEEVLKLLPPKKDRI) carry the Nuclear localization signal motif. Lys-719 is covalently cross-linked (Glycyl lysine isopeptide (Lys-Gly) (interchain with G-Cter in SUMO2)). The Helicase C-terminal domain maps to 853–1005 (ALGCILSELK…MTTVDEADEG (153 aa)). 892-899 (YLRLDGKT) contributes to the ATP binding site. A Glycyl lysine isopeptide (Lys-Gly) (interchain with G-Cter in SUMO2) cross-link involves residue Lys-991. A DEAD box motif is present at residues 1000–1003 (DEAD).

It belongs to the SNF2/RAD54 helicase family. In terms of assembly, binds to DNA preferentially in the vicinity of transcriptional start sites. Interacts with MSH2 and TRIM28. Part of a complex composed of TRIM28, HDAC1, HDAC2 and EHMT2. Interacts with PCNA.

The protein resides in the nucleus. The protein localises to the chromosome. It carries out the reaction ATP + H2O = ADP + phosphate + H(+). Functionally, DNA helicase that possesses intrinsic ATP-dependent nucleosome-remodeling activity and is both required for DNA repair and heterochromatin organization. Promotes DNA end resection of double-strand breaks (DSBs) following DNA damage: probably acts by weakening histone DNA interactions in nucleosomes flanking DSBs. Required for the restoration of heterochromatin organization after replication. Acts at replication sites to facilitate the maintenance of heterochromatin by directing H3 and H4 histones deacetylation, H3 'Lys-9' trimethylation (H3K9me3) and restoration of silencing. In Mus musculus (Mouse), this protein is SWI/SNF-related matrix-associated actin-dependent regulator of chromatin subfamily A containing DEAD/H box 1 (Smarcad1).